A 180-amino-acid polypeptide reads, in one-letter code: Phosphoribosylaminoimidazole carboxylase (180 aa).

Residues Ser35, Asp38, Ser62, Lys65, Gly89, and Ser91 each coordinate substrate.

This sequence belongs to the AIR carboxylase family. Class II subfamily.

The enzyme catalyses 5-amino-1-(5-phospho-D-ribosyl)imidazole-4-carboxylate + H(+) = 5-amino-1-(5-phospho-beta-D-ribosyl)imidazole + CO2. Its pathway is purine metabolism; IMP biosynthesis via de novo pathway; 5-amino-1-(5-phospho-D-ribosyl)imidazole-4-carboxylate from 5-amino-1-(5-phospho-D-ribosyl)imidazole (carboxylase route): step 1/1. Its function is as follows. Catalyzes the reversible conversion of 5-aminoimidazole ribonucleotide (AIR) and CO(2) to 4-carboxy-5-aminoimidazole ribonucleotide (CAIR). In Archaeoglobus fulgidus (strain ATCC 49558 / DSM 4304 / JCM 9628 / NBRC 100126 / VC-16), this protein is Phosphoribosylaminoimidazole carboxylase.